A 235-amino-acid polypeptide reads, in one-letter code: Exosome complex component Rrp4 (235 aa).

The 75-residue stretch at 63–137 (GDLVIGYVTD…DEYPIILTLK (75 aa)) folds into the S1 motif domain. A KH domain is found at 147-203 (GTVVEITPVKVPRVIGKRGSMLNTLMELGCDIVVGQNGRIWVKCKDPRDEVFLASLI).

It belongs to the RRP4 family. As to quaternary structure, component of the archaeal exosome complex. Forms a trimer of Rrp4 and/or Csl4 subunits. The trimer associates with a hexameric ring-like arrangement composed of 3 Rrp41-Rrp42 heterodimers.

It localises to the cytoplasm. Its function is as follows. Non-catalytic component of the exosome, which is a complex involved in RNA degradation. Increases the RNA binding and the efficiency of RNA degradation. Confers strong poly(A) specificity to the exosome. The sequence is that of Exosome complex component Rrp4 from Pyrobaculum aerophilum (strain ATCC 51768 / DSM 7523 / JCM 9630 / CIP 104966 / NBRC 100827 / IM2).